Here is a 412-residue protein sequence, read N- to C-terminus: Multifunctional CCA protein (412 aa).

The ATP site is built by Gly8 and Arg11. Gly8 and Arg11 together coordinate CTP. Mg(2+)-binding residues include Glu21 and Asp23. Residues Arg91, Arg137, and Arg140 each coordinate ATP. Arg91, Arg137, and Arg140 together coordinate CTP. The HD domain maps to 228–329 (CGIHTLMSLQ…WRLLQRLDVL (102 aa)).

The protein belongs to the tRNA nucleotidyltransferase/poly(A) polymerase family. Bacterial CCA-adding enzyme type 1 subfamily. Monomer. Can also form homodimers and oligomers. Mg(2+) serves as cofactor. Ni(2+) is required as a cofactor.

The catalysed reaction is a tRNA precursor + 2 CTP + ATP = a tRNA with a 3' CCA end + 3 diphosphate. The enzyme catalyses a tRNA with a 3' CCA end + 2 CTP + ATP = a tRNA with a 3' CCACCA end + 3 diphosphate. Its function is as follows. Catalyzes the addition and repair of the essential 3'-terminal CCA sequence in tRNAs without using a nucleic acid template. Adds these three nucleotides in the order of C, C, and A to the tRNA nucleotide-73, using CTP and ATP as substrates and producing inorganic pyrophosphate. tRNA 3'-terminal CCA addition is required both for tRNA processing and repair. Also involved in tRNA surveillance by mediating tandem CCA addition to generate a CCACCA at the 3' terminus of unstable tRNAs. While stable tRNAs receive only 3'-terminal CCA, unstable tRNAs are marked with CCACCA and rapidly degraded. The sequence is that of Multifunctional CCA protein from Acinetobacter baumannii (strain AB307-0294).